Consider the following 101-residue polypeptide: NADH-quinone oxidoreductase subunit K (101 aa).

The next 3 helical transmembrane spans lie at 4–24, 30–50, and 61–81; these read LAHY…GIFL, IIIL…FVAF, and IFVF…LAIL.

This sequence belongs to the complex I subunit 4L family. In terms of assembly, NDH-1 is composed of 14 different subunits. Subunits NuoA, H, J, K, L, M, N constitute the membrane sector of the complex.

The protein localises to the cell inner membrane. The catalysed reaction is a quinone + NADH + 5 H(+)(in) = a quinol + NAD(+) + 4 H(+)(out). Its function is as follows. NDH-1 shuttles electrons from NADH, via FMN and iron-sulfur (Fe-S) centers, to quinones in the respiratory chain. The immediate electron acceptor for the enzyme in this species is believed to be ubiquinone. Couples the redox reaction to proton translocation (for every two electrons transferred, four hydrogen ions are translocated across the cytoplasmic membrane), and thus conserves the redox energy in a proton gradient. In Burkholderia cenocepacia (strain HI2424), this protein is NADH-quinone oxidoreductase subunit K.